The following is a 175-amino-acid chain: SsrA-binding protein (175 aa).

It belongs to the SmpB family.

It is found in the cytoplasm. Functionally, required for rescue of stalled ribosomes mediated by trans-translation. Binds to transfer-messenger RNA (tmRNA), required for stable association of tmRNA with ribosomes. tmRNA and SmpB together mimic tRNA shape, replacing the anticodon stem-loop with SmpB. tmRNA is encoded by the ssrA gene; the 2 termini fold to resemble tRNA(Ala) and it encodes a 'tag peptide', a short internal open reading frame. During trans-translation Ala-aminoacylated tmRNA acts like a tRNA, entering the A-site of stalled ribosomes, displacing the stalled mRNA. The ribosome then switches to translate the ORF on the tmRNA; the nascent peptide is terminated with the 'tag peptide' encoded by the tmRNA and targeted for degradation. The ribosome is freed to recommence translation, which seems to be the essential function of trans-translation. The sequence is that of SsrA-binding protein from Prochlorococcus marinus subsp. pastoris (strain CCMP1986 / NIES-2087 / MED4).